We begin with the raw amino-acid sequence, 147 residues long: DNA base-flipping protein (147 aa).

It belongs to the MGMT family. ATL subfamily. As to quaternary structure, interacts with several proteins, including UvrA, UvrD and the three subunits of the RNA polymerase.

Functionally, involved in DNA damage recognition. Binds DNA containing O(6)-methylguanine and larger O(6)-alkylguanine adducts. Binds to the damaged base and flips the base out of the DNA duplex into an extrahelical conformation, which allows processing by repair proteins. Also affects the regulation of gene expression in response to alkylation. In Thermus thermophilus (strain ATCC 27634 / DSM 579 / HB8), this protein is DNA base-flipping protein.